A 390-amino-acid chain; its full sequence is NADH-quinone oxidoreductase subunit D (390 aa).

This sequence belongs to the complex I 49 kDa subunit family. In terms of assembly, NDH-1 is composed of 14 different subunits. Subunits NuoB, C, D, E, F, and G constitute the peripheral sector of the complex.

The protein localises to the cell inner membrane. It catalyses the reaction a quinone + NADH + 5 H(+)(in) = a quinol + NAD(+) + 4 H(+)(out). In terms of biological role, NDH-1 shuttles electrons from NADH, via FMN and iron-sulfur (Fe-S) centers, to quinones in the respiratory chain. The immediate electron acceptor for the enzyme in this species is believed to be ubiquinone. Couples the redox reaction to proton translocation (for every two electrons transferred, four hydrogen ions are translocated across the cytoplasmic membrane), and thus conserves the redox energy in a proton gradient. This is NADH-quinone oxidoreductase subunit D from Geobacter sulfurreducens (strain ATCC 51573 / DSM 12127 / PCA).